A 718-amino-acid polypeptide reads, in one-letter code: Amino-acid acetyltransferase, mitochondrial (718 aa).

A mitochondrion-targeting transit peptide spans 1–36; the sequence is MNPNAVWPRTAQSSLKKHQVSLCTCQRRSHYRLRSF. Residues 97-116 are disordered; sequence QHQPDLPQKPTSAPASTAKI. Positions 539–708 constitute an N-acetyltransferase domain; sequence RQPRLRLDDP…YEAVCRSIQP (170 aa).

The protein belongs to the acetyltransferase family.

The protein resides in the mitochondrion. It carries out the reaction L-glutamate + acetyl-CoA = N-acetyl-L-glutamate + CoA + H(+). It participates in amino-acid biosynthesis; L-arginine biosynthesis; N(2)-acetyl-L-ornithine from L-glutamate: step 1/4. N-acetylglutamate synthase involved in arginine biosynthesis. The polypeptide is Amino-acid acetyltransferase, mitochondrial (arg2) (Aspergillus clavatus (strain ATCC 1007 / CBS 513.65 / DSM 816 / NCTC 3887 / NRRL 1 / QM 1276 / 107)).